Here is a 527-residue protein sequence, read N- to C-terminus: Probable pectinesterase/pectinesterase inhibitor 32 (527 aa).

The signal sequence occupies residues 1 to 24 (MAKFRQMGSSIFFLFLIIISLCSA). Residues 25-165 (HKEAFSSTDL…GTTVRNLLTM (141 aa)) form a pectinesterase inhibitor 32 region. N-linked (GlcNAc...) asparagine glycans are attached at residues asparagine 110, asparagine 209, asparagine 224, and asparagine 280. Residues 214–511 (DAVVAADGTG…FTVSQLIQGN (298 aa)) form a pectinesterase 32 region. The substrate site is built by threonine 289 and glutamine 319. Aspartate 342 serves as the catalytic Proton donor; for pectinesterase activity. Cysteine 356 and cysteine 376 are joined by a disulfide. Aspartate 363 functions as the Nucleophile; for pectinesterase activity in the catalytic mechanism. N-linked (GlcNAc...) asparagine glycosylation is present at asparagine 423. The substrate site is built by arginine 431 and tryptophan 433. N-linked (GlcNAc...) asparagine glycosylation is found at asparagine 494 and asparagine 501.

It in the N-terminal section; belongs to the PMEI family. This sequence in the C-terminal section; belongs to the pectinesterase family. As to expression, expressed in siliques.

It localises to the secreted. It is found in the cell wall. The enzyme catalyses [(1-&gt;4)-alpha-D-galacturonosyl methyl ester](n) + n H2O = [(1-&gt;4)-alpha-D-galacturonosyl](n) + n methanol + n H(+). Its pathway is glycan metabolism; pectin degradation; 2-dehydro-3-deoxy-D-gluconate from pectin: step 1/5. In terms of biological role, acts in the modification of cell walls via demethylesterification of cell wall pectin. This Arabidopsis thaliana (Mouse-ear cress) protein is Probable pectinesterase/pectinesterase inhibitor 32 (PME32).